The primary structure comprises 463 residues: Interstitial collagenase B (463 aa).

The first 17 residues, 1-17 (MPSLPLLLRLWAASSYS), serve as a signal peptide directing secretion. A propeptide spans 18-96 (FPVIQDGLQK…PRCGVPDVAP (79 aa)) (activation peptide). The Cysteine switch motif lies at 87–94 (PRCGVPDV). C89 is a Zn(2+) binding site. Residues 95–273 (APYAITHNNP…PIQLTDATLD (179 aa)) are metalloprotease. A Ca(2+)-binding site is contributed by D155. Residues H165 and D167 each contribute to the Zn(2+) site. 2 residues coordinate Ca(2+): D172 and G173. H180 is a binding site for Zn(2+). Residues G187 and G189 each coordinate Ca(2+). Position 193 (H193) interacts with Zn(2+). D195 is a binding site for Ca(2+). A Zn(2+)-binding site is contributed by H215. E216 is an active-site residue. 2 residues coordinate Zn(2+): H219 and H225. C275 and C463 are oxidised to a cystine. 2 Hemopexin repeats span residues 278–321 (GLTF…WPNL) and 322–368 (PGKF…FGFP). D282 serves as a coordination point for Ca(2+). N370 carries an N-linked (GlcNAc...) asparagine glycan. Hemopexin repeat units follow at residues 371 to 419 (VTNI…FPGI) and 420 to 463 (DYKV…WFNC). Positions 375 and 424 each coordinate Ca(2+).

It belongs to the peptidase M10A family. The cofactor is Ca(2+). It depends on Zn(2+) as a cofactor.

The protein resides in the secreted. The protein localises to the extracellular space. It is found in the extracellular matrix. The enzyme catalyses Cleavage of the triple helix of collagen at about three-quarters of the length of the molecule from the N-terminus, at 775-Gly-|-Ile-776 in the alpha1(I) chain. Cleaves synthetic substrates and alpha-macroglobulins at bonds where P1' is a hydrophobic residue.. With respect to regulation, can be activated without removal of the activation peptide. The polypeptide is Interstitial collagenase B (Mmp1b) (Mus musculus (Mouse)).